The chain runs to 121 residues: Ribonuclease P protein component 4 (121 aa).

Cys-63, Cys-66, Cys-89, and Cys-92 together coordinate Zn(2+).

The protein belongs to the eukaryotic/archaeal RNase P protein component 4 family. In terms of assembly, consists of a catalytic RNA component and at least 4-5 protein subunits. Requires Zn(2+) as cofactor.

It is found in the cytoplasm. The catalysed reaction is Endonucleolytic cleavage of RNA, removing 5'-extranucleotides from tRNA precursor.. In terms of biological role, part of ribonuclease P, a protein complex that generates mature tRNA molecules by cleaving their 5'-ends. The polypeptide is Ribonuclease P protein component 4 (Methanobrevibacter smithii (strain ATCC 35061 / DSM 861 / OCM 144 / PS)).